Reading from the N-terminus, the 95-residue chain is Transcription and mRNA export factor ENY2-2 (95 aa).

The protein belongs to the ENY2 family. In terms of assembly, component of the nuclear pore complex (NPC)-associated TREX-2 complex (transcription and export complex 2). Component of the SAGA transcription coactivator-HAT complex. Within the SAGA complex, participates in a subcomplex of SAGA called the DUB module (deubiquitination module).

The protein localises to the nucleus. It is found in the nucleoplasm. Functionally, involved in mRNA export coupled transcription activation by association with both the TREX-2 and the SAGA complexes. The transcription regulatory histone acetylation (HAT) complex SAGA is a multiprotein complex that activates transcription by remodeling chromatin and mediating histone acetylation and deubiquitination. Within the SAGA complex, participates in a subcomplex that specifically deubiquitinates histones. The SAGA complex is recruited to specific gene promoters by activators, where it is required for transcription. The TREX-2 complex functions in docking export-competent ribonucleoprotein particles (mRNPs) to the nuclear entrance of the nuclear pore complex (nuclear basket). TREX-2 participates in mRNA export and accurate chromatin positioning in the nucleus by tethering genes to the nuclear periphery. This is Transcription and mRNA export factor ENY2-2 (eny2-2) from Salmo salar (Atlantic salmon).